The sequence spans 491 residues: Ribonuclease Y (491 aa).

A helical transmembrane segment spans residues 4-24; that stretch reads LIATVGVVAVAALVIAIFVVI. The KH domain maps to 181–247; it reads VVSVVHLPGD…RVALERLVDD (67 aa). Residues 307-400 enclose the HD domain; sequence VLKHLVETAH…TQAADAISGG (94 aa).

The protein belongs to the RNase Y family.

The protein resides in the cell membrane. Endoribonuclease that initiates mRNA decay. This Acidothermus cellulolyticus (strain ATCC 43068 / DSM 8971 / 11B) protein is Ribonuclease Y.